Consider the following 496-residue polypeptide: Probable malate:quinone oxidoreductase (496 aa).

This sequence belongs to the MQO family. FAD is required as a cofactor.

It carries out the reaction (S)-malate + a quinone = a quinol + oxaloacetate. The protein operates within carbohydrate metabolism; tricarboxylic acid cycle; oxaloacetate from (S)-malate (quinone route): step 1/1. This Prochlorococcus marinus (strain NATL1A) protein is Probable malate:quinone oxidoreductase.